Consider the following 1082-residue polypeptide: Error-prone DNA polymerase (1082 aa).

The protein belongs to the DNA polymerase type-C family. DnaE2 subfamily.

Its subcellular location is the cytoplasm. The enzyme catalyses DNA(n) + a 2'-deoxyribonucleoside 5'-triphosphate = DNA(n+1) + diphosphate. DNA polymerase involved in damage-induced mutagenesis and translesion synthesis (TLS). It is not the major replicative DNA polymerase. The sequence is that of Error-prone DNA polymerase from Xanthomonas campestris pv. campestris (strain B100).